Reading from the N-terminus, the 430-residue chain is MKTTINQVYKHVGEEVTIGAWIANKRSSGKIAFLQLRDGTGFIQGVVVKAEVDEETFQTAKSVTQETSLYVKGVVKEDERSPLGYELAVTSLEVIHEATDYPITPKEHGTEFLMDHRHLWLRSKRQHATMKIRNEIIRATYEFFNKEGFVKVDPPILTGSAPEGTTELFATKYFDEDAYLSQSGQLYMEAAAMALGKVFSFGPTFRAEKSKTKRHLIEFWMIEPEMAFVEFNENLEVQENYVSFIVQSVLENCKIELNTLGRDTSKLELIKAPFPRITYDEAIQFLKEKGFDDIEWGDDFGAPHETAIAESYDKPVFITHYPTSLKPFYMQPAPDREDVVLCADLIAPEGYGEIIGGSERIHDLELLEARLKEHGLESDAYQWYAELRKYGSVPHSGFGLGLERTVAWICGSPHVRETIPFPRLLNRLYP.

The protein belongs to the class-II aminoacyl-tRNA synthetase family. Homodimer.

The protein resides in the cytoplasm. The catalysed reaction is tRNA(Asn) + L-asparagine + ATP = L-asparaginyl-tRNA(Asn) + AMP + diphosphate + H(+). The sequence is that of Asparagine--tRNA ligase from Bacillus licheniformis (strain ATCC 14580 / DSM 13 / JCM 2505 / CCUG 7422 / NBRC 12200 / NCIMB 9375 / NCTC 10341 / NRRL NRS-1264 / Gibson 46).